We begin with the raw amino-acid sequence, 363 residues long: Large ribosomal subunit protein uL4 (363 aa).

This sequence belongs to the universal ribosomal protein uL4 family. In terms of assembly, component of the large ribosomal subunit. Mature ribosomes consist of a small (40S) and a large (60S) subunit. The 40S subunit contains about 32 different proteins and 1 molecule of RNA (18S). The 60S subunit contains 45 different proteins and 3 molecules of RNA (25S, 5.8S and 5S).

The protein resides in the cytoplasm. Its function is as follows. Component of the ribosome, a large ribonucleoprotein complex responsible for the synthesis of proteins in the cell. The small ribosomal subunit (SSU) binds messenger RNAs (mRNAs) and translates the encoded message by selecting cognate aminoacyl-transfer RNA (tRNA) molecules. The large subunit (LSU) contains the ribosomal catalytic site termed the peptidyl transferase center (PTC), which catalyzes the formation of peptide bonds, thereby polymerizing the amino acids delivered by tRNAs into a polypeptide chain. The nascent polypeptides leave the ribosome through a tunnel in the LSU and interact with protein factors that function in enzymatic processing, targeting, and the membrane insertion of nascent chains at the exit of the ribosomal tunnel. This is Large ribosomal subunit protein uL4 from Candida albicans (strain SC5314 / ATCC MYA-2876) (Yeast).